A 360-amino-acid polypeptide reads, in one-letter code: S-adenosylmethionine:tRNA ribosyltransferase-isomerase (360 aa).

The protein belongs to the QueA family. As to quaternary structure, monomer.

It is found in the cytoplasm. The catalysed reaction is 7-aminomethyl-7-carbaguanosine(34) in tRNA + S-adenosyl-L-methionine = epoxyqueuosine(34) in tRNA + adenine + L-methionine + 2 H(+). It participates in tRNA modification; tRNA-queuosine biosynthesis. Transfers and isomerizes the ribose moiety from AdoMet to the 7-aminomethyl group of 7-deazaguanine (preQ1-tRNA) to give epoxyqueuosine (oQ-tRNA). In Burkholderia pseudomallei (strain 1106a), this protein is S-adenosylmethionine:tRNA ribosyltransferase-isomerase.